The chain runs to 257 residues: Short-chain dehydrogenase reductase 3b (257 aa).

Position 12 to 36 (Ile-12 to Val-36) interacts with NAD(+). Position 144 (Ser-144) interacts with substrate. Residue Tyr-157 is the Proton acceptor of the active site.

It belongs to the short-chain dehydrogenases/reductases (SDR) family.

The chain is Short-chain dehydrogenase reductase 3b (SDR3b) from Arabidopsis thaliana (Mouse-ear cress).